We begin with the raw amino-acid sequence, 128 residues long: Large ribosomal subunit protein bL17 (128 aa).

This sequence belongs to the bacterial ribosomal protein bL17 family. Part of the 50S ribosomal subunit. Contacts protein L32.

In Streptococcus pneumoniae serotype 2 (strain D39 / NCTC 7466), this protein is Large ribosomal subunit protein bL17.